The sequence spans 364 residues: tRNA N6-adenosine threonylcarbamoyltransferase (364 aa).

Fe cation-binding residues include H118 and H122. Substrate is bound by residues 140 to 144 (LVSGG), D173, G186, and N288. D316 is a binding site for Fe cation.

This sequence belongs to the KAE1 / TsaD family. It depends on Fe(2+) as a cofactor.

The protein resides in the cytoplasm. It carries out the reaction L-threonylcarbamoyladenylate + adenosine(37) in tRNA = N(6)-L-threonylcarbamoyladenosine(37) in tRNA + AMP + H(+). Functionally, required for the formation of a threonylcarbamoyl group on adenosine at position 37 (t(6)A37) in tRNAs that read codons beginning with adenine. Is involved in the transfer of the threonylcarbamoyl moiety of threonylcarbamoyl-AMP (TC-AMP) to the N6 group of A37, together with TsaE and TsaB. TsaD likely plays a direct catalytic role in this reaction. The sequence is that of tRNA N6-adenosine threonylcarbamoyltransferase from Cereibacter sphaeroides (strain KD131 / KCTC 12085) (Rhodobacter sphaeroides).